Consider the following 160-residue polypeptide: Transcription elongation factor GreA (160 aa).

Residues 1–72 (MAEKTYPMTL…QISSLETKIR (72 aa)) adopt a coiled-coil conformation.

The protein belongs to the GreA/GreB family.

Necessary for efficient RNA polymerase transcription elongation past template-encoded arresting sites. The arresting sites in DNA have the property of trapping a certain fraction of elongating RNA polymerases that pass through, resulting in locked ternary complexes. Cleavage of the nascent transcript by cleavage factors such as GreA or GreB allows the resumption of elongation from the new 3'terminus. GreA releases sequences of 2 to 3 nucleotides. The sequence is that of Transcription elongation factor GreA from Streptococcus pneumoniae (strain ATCC 700669 / Spain 23F-1).